Reading from the N-terminus, the 146-residue chain is SCPCDANSCIMSATLSNEPSSRFSDCSFSLPSRFSDCSFNQYSSDIIHYHECLLNEPSRTDIVSPPVCGNYYPEVGEDCDCGPPANCQNPCCDAATCGLTTGSQCAEGLCCDQCRLKKAGTICRKARGDNPDDRCTGQSGVCPRNT.

The Peptidase M12B domain maps to 1–57; sequence SCPCDANSCIMSATLSNEPSSRFSDCSFSLPSRFSDCSFNQYSSDIIHYHECLLNEP. Intrachain disulfides connect Cys2–Cys37, Cys4–Cys9, Cys68–Cys87, Cys79–Cys97, Cys81–Cys92, Cys91–Cys114, Cys105–Cys111, Cys110–Cys135, and Cys123–Cys142. The Disintegrin domain maps to 65–146; that stretch reads PPVCGNYYPE…GQSGVCPRNT (82 aa). A Cell attachment site motif is present at residues 127–129; the sequence is RGD.

The protein belongs to the venom metalloproteinase (M12B) family. P-II subfamily. P-IIb sub-subfamily. As to quaternary structure, monomer (disintegrin). Zn(2+) serves as cofactor. In terms of tissue distribution, expressed by the venom gland.

It localises to the secreted. In terms of biological role, snake venom zinc metalloproteinase that inhibits ADP-induced platelet aggregation (probably by binding integrin alpha-IIb/beta-3 (ITGA2B/ITGB3)) and degrades fibrinogen. This is Zinc metalloproteinase-disintegrin salmosin-3 from Gloydius brevicauda (Korean slamosa snake).